The chain runs to 136 residues: Protein NrdI (136 aa).

The protein belongs to the NrdI family.

Probably involved in ribonucleotide reductase function. The polypeptide is Protein NrdI (Salmonella dublin (strain CT_02021853)).